The chain runs to 89 residues: MSDNTEKKTLRTVEGRVVSNKMDKTVTVLVERQVKHALYGKYIKRSTKLHAHDADNACKEGDVVRVTEIAPMSKTKNWRVVEVITRAAE.

The protein belongs to the universal ribosomal protein uS17 family. As to quaternary structure, part of the 30S ribosomal subunit.

One of the primary rRNA binding proteins, it binds specifically to the 5'-end of 16S ribosomal RNA. This is Small ribosomal subunit protein uS17 from Stenotrophomonas maltophilia (strain K279a).